The chain runs to 460 residues: tRNA modification GTPase MnmE (460 aa).

Positions 23, 86, and 126 each coordinate (6S)-5-formyl-5,6,7,8-tetrahydrofolate. The region spanning 222–381 (GLSTAIIGRP…LEAAIASLFF (160 aa)) is the TrmE-type G domain. Residue asparagine 232 coordinates K(+). GTP is bound by residues 232–237 (NVGKSS), 251–257 (TDIAGTT), and 276–279 (DTAG). Mg(2+) is bound at residue serine 236. The K(+) site is built by threonine 251, isoleucine 253, and threonine 256. Residue threonine 257 participates in Mg(2+) binding. Residue lysine 460 coordinates (6S)-5-formyl-5,6,7,8-tetrahydrofolate.

The protein belongs to the TRAFAC class TrmE-Era-EngA-EngB-Septin-like GTPase superfamily. TrmE GTPase family. In terms of assembly, homodimer. Heterotetramer of two MnmE and two MnmG subunits. It depends on K(+) as a cofactor.

It localises to the cytoplasm. Exhibits a very high intrinsic GTPase hydrolysis rate. Involved in the addition of a carboxymethylaminomethyl (cmnm) group at the wobble position (U34) of certain tRNAs, forming tRNA-cmnm(5)s(2)U34. In Exiguobacterium sibiricum (strain DSM 17290 / CCUG 55495 / CIP 109462 / JCM 13490 / 255-15), this protein is tRNA modification GTPase MnmE.